Here is a 474-residue protein sequence, read N- to C-terminus: Cytochrome c-552 (474 aa).

The first 29 residues, 1-29, serve as a signal peptide directing secretion; the sequence is MSIKHWMASSVSVTALVMTALLNITAVSA. Residue H91 participates in heme c binding. 3 residues coordinate heme: C119, C122, and K123. The heme c site is built by C157, C160, H161, C206, C209, and H210. E212, Y213, K258, and Q260 together coordinate Ca(2+). Residue Y213 participates in substrate binding. H261 serves as a coordination point for substrate. Heme c contacts are provided by H272, C279, C282, H283, H298, C311, C314, H315, and H390.

The protein belongs to the cytochrome c-552 family. Requires Ca(2+) as cofactor. Heme c serves as cofactor.

The protein localises to the periplasm. The enzyme catalyses 6 Fe(III)-[cytochrome c] + NH4(+) + 2 H2O = 6 Fe(II)-[cytochrome c] + nitrite + 8 H(+). It functions in the pathway nitrogen metabolism; nitrate reduction (assimilation). In terms of biological role, catalyzes the reduction of nitrite to ammonia, consuming six electrons in the process. The polypeptide is Cytochrome c-552 (Vibrio vulnificus (strain CMCP6)).